The sequence spans 257 residues: ABC transporter ATP-binding protein YxdL (257 aa).

Positions 5–243 (LEVKHINKTY…FYEQILDVLS (239 aa)) constitute an ABC transporter domain. ATP is bound at residue 40–47 (GPSGSGKT).

This sequence belongs to the ABC transporter superfamily. In terms of assembly, the complex is composed of two ATP-binding proteins (YxdL) and two transmembrane proteins (YxdM).

Part of the ABC transporter complex YxdLM which could be involved in peptide resistance. Responsible for energy coupling to the transport system. This is ABC transporter ATP-binding protein YxdL (yxdL) from Bacillus subtilis (strain 168).